The sequence spans 499 residues: Anaerobic magnesium-protoporphyrin IX monomethyl ester cyclase (499 aa).

The 137-residue stretch at 9-145 folds into the B12-binding domain; it reads PHPAIGSRIP…AALENHNDLN (137 aa). The region spanning 188–420 is the Radical SAM core domain; the sequence is YGGKQAVVIQ…PPWRIFLWVK (233 aa). [4Fe-4S] cluster contacts are provided by Cys-202, Cys-206, and Cys-209.

Belongs to the BchE family. It depends on [4Fe-4S] cluster as a cofactor. Adenosylcob(III)alamin serves as cofactor.

The enzyme catalyses Mg-protoporphyrin IX 13-monomethyl ester + 3 S-adenosyl-L-methionine + H2O = 3,8-divinyl protochlorophyllide a + 3 5'-deoxyadenosine + 3 L-methionine + 4 H(+). It functions in the pathway porphyrin-containing compound metabolism; bacteriochlorophyll biosynthesis (light-independent). Its function is as follows. Involved in the tetrapyrrole biosynthetic pathways leading to chlorophyll and bacteriochlorophyll (BChl). Catalyzes the anaerobic formation of the isocyclic ring (E-ring) in Mg-protoporphyrin monomethyl ester (MPE) to yield protochlorophyllide a (PChlide a) via a six-electron oxidation and the formation of an oxo group at position C13 using oxygen from a water molecule. The sequence is that of Anaerobic magnesium-protoporphyrin IX monomethyl ester cyclase from Synechocystis sp. (strain ATCC 27184 / PCC 6803 / Kazusa).